Here is a 179-residue protein sequence, read N- to C-terminus: Guanosine-3',5'-bis(diphosphate) 3'-pyrophosphohydrolase MESH1 (179 aa).

Residue Gly-2 is modified to N-acetylglycine. Lys-25 is subject to N6-acetyllysine. The HD domain maps to 32–127; the sequence is YINHPIGVAR…VKLADKLYNL (96 aa). Mn(2+) is bound by residues His-35, His-61, and Asp-62. Active-site nucleophile residues include Glu-65 and Asp-66. Lys-97 is subject to N6-acetyllysine. Asp-122 serves as a coordination point for Mn(2+). Lys-123 is subject to N6-acetyllysine.

This sequence belongs to the MESH1 family. It depends on Mn(2+) as a cofactor.

The catalysed reaction is guanosine 3',5'-bis(diphosphate) + H2O = GDP + diphosphate + H(+). Functionally, ppGpp hydrolyzing enzyme involved in starvation response. In Homo sapiens (Human), this protein is Guanosine-3',5'-bis(diphosphate) 3'-pyrophosphohydrolase MESH1 (HDDC3).